A 419-amino-acid chain; its full sequence is eIF5-mimic protein 2 (419 aa).

Methionine 1 bears the N-acetylmethionine mark. A compositionally biased stretch (polar residues) spans 1–15 (MNNQKQQKPTLSGQR). Positions 1 to 26 (MNNQKQQKPTLSGQRFKTRKRDEKER) are disordered. Serine 12 carries the phosphoserine modification. A W2 domain is found at 247–414 (NQQTIGARKE…KNAEEESESE (168 aa)). Lysine 368 participates in a covalent cross-link: Glycyl lysine isopeptide (Lys-Gly) (interchain with G-Cter in SUMO2). Phosphoserine occurs at positions 411 and 413.

This sequence belongs to the BZW family.

Its function is as follows. Translation initiation regulator which represses repeat-associated non-AUG (RAN) initiated translation probably by acting as a competitive inhibitor of eukaryotic translation initiation factor 5 (EIF5) function. Enhances histone H4 gene transcription but does not seem to bind DNA directly. This Pongo abelii (Sumatran orangutan) protein is eIF5-mimic protein 2 (BZW1).